The chain runs to 406 residues: 11-beta-hydroxysteroid dehydrogenase type 2 (406 aa).

82 to 111 (TRAVLITGCDSGFGKETAKKLDAMGFTVLA) contacts NAD(+). S219 is a substrate binding site. The active-site Proton acceptor is Y232. A disordered region spans residues 379 to 406 (GQPGATPAPDTAQDNPNPNPDPSLVGAR).

Belongs to the short-chain dehydrogenases/reductases (SDR) family. In terms of assembly, interacts with ligand-free cytoplasmic NR3C2. Highly expressed in the kidney.

The protein resides in the microsome. It localises to the endoplasmic reticulum. The catalysed reaction is an 11beta-hydroxysteroid + NAD(+) = an 11-oxosteroid + NADH + H(+). It catalyses the reaction corticosterone + NAD(+) = 11-dehydrocorticosterone + NADH + H(+). The enzyme catalyses cortisol + NAD(+) = cortisone + NADH + H(+). It carries out the reaction 11beta,17beta-dihydroxyandrost-4-ene-3-one + NAD(+) = 17beta-hydroxyandrost-4-ene-3,11-dione + NADH + H(+). The catalysed reaction is 11beta-hydroxyandrost-4-ene-3,17-dione + NAD(+) = androst-4-ene-3,11,17-trione + NADH + H(+). Its pathway is steroid metabolism. Its activity is regulated as follows. Inhibited by carbenoloxone. In terms of biological role, catalyzes the conversion of biologically active 11beta-hydroxyglucocorticoids (11beta-hydroxysteroid) such as corticosterone, to inactive 11-ketoglucocorticoids (11-oxosteroid) such as 11-dehydrocorticosterone, in the presence of NAD(+). Functions as a dehydrogenase (oxidase), thereby decreasing the concentration of active glucocorticoids, thus protecting the nonselective mineralocorticoid receptor from occupation by glucocorticoids. Plays an important role in maintaining glucocorticoids balance during preimplantation and protects the fetus from excessive maternal corticosterone exposure. Catalyzes the oxidation of 11beta-hydroxytestosterone (11beta,17beta-dihydroxyandrost-4-ene-3-one) to 11-ketotestosterone (17beta-hydroxyandrost-4-ene-3,11-dione), a major bioactive androgen. Catalyzes the conversion of 11beta-hydroxyandrostenedione (11beta-hydroxyandrost-4-ene-3,17-dione) to 11-ketoandrostenedione (androst-4-ene-3,11,17-trione), which can be further metabolized to 11-ketotestosterone. Converts 7-beta-25-dihydroxycholesterol to 7-oxo-25-hydroxycholesterol in vitro. 7-beta-25-dihydroxycholesterol (not 7-oxo-25-hydroxycholesterol) acts as a ligand for the G-protein-coupled receptor (GPCR) Epstein-Barr virus-induced gene 2 (EBI2) and may thereby regulate immune cell migration. May protect ovulating oocytes and fertilizing spermatozoa from the adverse effects of cortisol. This is 11-beta-hydroxysteroid dehydrogenase type 2 (HSD11B2) from Oryctolagus cuniculus (Rabbit).